The primary structure comprises 1696 residues: uncharacterized protein (1696 aa).

4 disordered regions span residues 1-113, 151-194, 258-284, and 299-376; these read MDSS…HPQY, DSWT…SRSR, DVTRSSASREGARETRNEGRTLYPEKK, and GRRE…KQRG. Residues 21 to 42 are compositionally biased toward pro residues; the sequence is LHPPSAPLPPPPPLPPPPPPRQ. Positions 52-61 are enriched in polar residues; sequence GRSTQSNGQR. The segment covering 96-113 has biased composition (low complexity); that stretch reads QQQHQPLSLQQQQQHPQY. Residues 170-183 are compositionally biased toward polar residues; it reads RNYQYDYSRNSSGV. Composition is skewed to basic and acidic residues over residues 267-284, 325-340, and 358-376; these read EGARETRNEGRTLYPEKK, ETPRSYKNSRENEWSR, and RGKEHLGHSDRGLVEKQRG. Ser378 is modified (phosphoserine). 7 disordered regions span residues 419–483, 688–724, 1063–1090, 1184–1211, 1319–1340, 1361–1429, and 1658–1696; these read RALL…GGKL, SDIGGIEDDNKRIDKNVDSLSPENDSSRGRPMGLDSP, IKHKEDNCTESVEVETHEEKAKLPGGTS, TSKSIEKIESSGGTSEHRTPETDIVAGS, GEAVSSDGQVSGTEIPGGSGVR, VVSV…SDAS, and SESRCNQSISLPDDALDTRSAANMVSERPSSSAFSDSGM. Basic and acidic residues-rich tracts occupy residues 421–436 and 695–704; these read LLSDKNEKVSVTERNG and DDNKRIDKNV. Ser708 carries the phosphoserine modification. A compositionally biased stretch (basic and acidic residues) spans 1184–1204; it reads TSKSIEKIESSGGTSEHRTPE. The span at 1361–1370 shows a compositional bias: basic and acidic residues; it reads VVSVPHRDPQ. 3 stretches are compositionally biased toward polar residues: residues 1389–1398, 1658–1667, and 1677–1696; these read NYSTQKSYPS, SESRCNQSIS, and SAANMVSERPSSSAFSDSGM.

This is an uncharacterized protein from Arabidopsis thaliana (Mouse-ear cress).